Consider the following 622-residue polypeptide: MHPEVSEQQADGATEPSLEESAGDHSGAGPGVRKEEINETKETCVGPSTTSCQSQKQQSGDSRLECRSGYARNDRDDRGPRMTKEFLQKLCKQHKLYITPALNDTLYLHFKGFDRIENLEEYTGLRCLWLECNGIQRIENLQAQSELRCLFLQVNLLHKIENLEPLQKLDALNLSNNYIKTIENLSCLPVLNTLQMAHNRLETVADIQHLGECLRLCVLDLSHNMLSDPEILSVLESMPCLRVLNLMGNPVTKHIPNYRRTVTVRLKQLTYLDDRPVFPKDRACAEAWARGGYAAEKEERLQWESREHKKITDSLEALAMIKRRAEERKKARDKGETPLPDSEESSSTSPEAQEKPPLGETQEKIELFVKGSFKAKDELFPEKPGGEEELAVVADRTVEEPDLSGSLAQSQIPLVATAEESTSSVAATDGARTEDTEAIALETKERLFIDDLPDLEDVDGMDISIEDQTKETGIPKIQVVSSLSDDSDPELNDSSLPMLEHTPTGSTGILSNIFAVCKDSSKAARVPLTDICKPTATTEVETQGQVFSTTRPQPLIQELGEDGRGENEPNQSLPAQSSEDGDSQLPEATPLGDRAENEAQSSLDLGEPSPRASLEDIEFGLD.

Polar residues predominate over residues 1 to 11 (MHPEVSEQQAD). The disordered stretch occupies residues 1–80 (MHPEVSEQQA…ARNDRDDRGP (80 aa)). Residues 32 to 42 (VRKEEINETKE) are compositionally biased toward basic and acidic residues. Residues 48-59 (STTSCQSQKQQS) are compositionally biased toward low complexity. A compositionally biased stretch (basic and acidic residues) spans 62-80 (SRLECRSGYARNDRDDRGP). LRR repeat units follow at residues 101-123 (ALNDTLYLHFKGFDRIENLEEYT), 124-145 (GLRCLWLECNGIQRIENLQAQS), 146-167 (ELRCLFLQVNLLHKIENLEPLQ), 168-189 (KLDALNLSNNYIKTIENLSCLP), 190-211 (VLNTLQMAHNRLETVADIQHLG), and 215-236 (RLCVLDLSHNMLSDPEILSVLE). In terms of domain architecture, LRRCT spans 249–288 (NPVTKHIPNYRRTVTVRLKQLTYLDDRPVFPKDRACAEAW). Over residues 326 to 336 (EERKKARDKGE) the composition is skewed to basic and acidic residues. Positions 326–363 (EERKKARDKGETPLPDSEESSSTSPEAQEKPPLGETQE) are disordered. The segment covering 337–351 (TPLPDSEESSSTSPE) has biased composition (low complexity). A phosphoserine mark is found at Ser-349, Ser-464, and Ser-487. 2 disordered regions span residues 481–505 (SSLSDDSDPELNDSSLPMLEHTPTG) and 535–622 (TATT…FGLD). Composition is skewed to polar residues over residues 535 to 552 (TATTEVETQGQVFSTTRP) and 568 to 578 (EPNQSLPAQSS).

The protein belongs to the DNAAF1 family.

It is found in the cell projection. The protein resides in the cilium. In terms of biological role, cilium-specific protein required for the stability of the ciliary architecture. Plays a role in cytoplasmic preassembly of dynein arms. Involved in regulation of microtubule-based cilia and actin-based brush border microvilli. This is Dynein axonemal assembly factor 1 (Dnaaf1) from Peromyscus californicus (California mouse).